A 67-amino-acid polypeptide reads, in one-letter code: Large ribosomal subunit protein bL32 (67 aa).

The segment covering 1–19 (MAVPKRKMSRANTRARRSQ) has biased composition (basic residues). Residues 1 to 21 (MAVPKRKMSRANTRARRSQWK) form a disordered region.

This sequence belongs to the bacterial ribosomal protein bL32 family.

This chain is Large ribosomal subunit protein bL32, found in Micrococcus luteus (strain ATCC 4698 / DSM 20030 / JCM 1464 / CCM 169 / CCUG 5858 / IAM 1056 / NBRC 3333 / NCIMB 9278 / NCTC 2665 / VKM Ac-2230) (Micrococcus lysodeikticus).